Reading from the N-terminus, the 198-residue chain is Large ribosomal subunit protein uL5 (198 aa).

The protein belongs to the universal ribosomal protein uL5 family. In terms of assembly, part of the 50S ribosomal subunit; part of the 5S rRNA/L5/L18/L25 subcomplex. Contacts the 5S rRNA and the P site tRNA. Forms a bridge to the 30S subunit in the 70S ribosome.

This is one of the proteins that bind and probably mediate the attachment of the 5S RNA into the large ribosomal subunit, where it forms part of the central protuberance. In the 70S ribosome it contacts protein S13 of the 30S subunit (bridge B1b), connecting the 2 subunits; this bridge is implicated in subunit movement. Contacts the P site tRNA; the 5S rRNA and some of its associated proteins might help stabilize positioning of ribosome-bound tRNAs. In Chlorobium phaeovibrioides (strain DSM 265 / 1930) (Prosthecochloris vibrioformis (strain DSM 265)), this protein is Large ribosomal subunit protein uL5.